Reading from the N-terminus, the 799-residue chain is ATP synthase subunit alpha (799 aa).

The ATP synthase alpha chain stretch occupies residues M1 to E549. An ATP-binding site is contributed by G170–T177. Positions T550–K799 are unknown.

It belongs to the ATPase alpha/beta chains family. In terms of assembly, F-type ATPases have 2 components, CF(1) - the catalytic core - and CF(0) - the membrane proton channel. CF(1) has five subunits: alpha(3), beta(3), gamma(1), delta(1), epsilon(1). CF(0) has three main subunits: a(1), b(2) and c(9-12). The alpha and beta chains form an alternating ring which encloses part of the gamma chain. CF(1) is attached to CF(0) by a central stalk formed by the gamma and epsilon chains, while a peripheral stalk is formed by the delta and b chains.

It localises to the cell membrane. The enzyme catalyses ATP + H2O + 4 H(+)(in) = ADP + phosphate + 5 H(+)(out). Produces ATP from ADP in the presence of a proton gradient across the membrane. The alpha chain is a regulatory subunit. The protein is ATP synthase subunit alpha (atpA) of Ureaplasma parvum serovar 3 (strain ATCC 27815 / 27 / NCTC 11736).